A 193-amino-acid polypeptide reads, in one-letter code: Ubiquitin-conjugating enzyme E2 E1 (193 aa).

The interval 1 to 45 (MSDDDSRASTSSSSSSSSNQQTEKEGSTPKKKESKVSMSKNSKLL) is disordered. S2 is subject to N-acetylserine. The span at 8-18 (ASTSSSSSSSS) shows a compositional bias: low complexity. The segment covering 22-35 (TEKEGSTPKKKESK) has biased composition (basic and acidic residues). The span at 36 to 45 (VSMSKNSKLL) shows a compositional bias: polar residues. The region spanning 47–193 (TSAKRIQKEL…ARQWTKRYAT (147 aa)) is the UBC core domain. C131 serves as the catalytic Glycyl thioester intermediate. A Glycyl lysine isopeptide (Lys-Gly) (interchain with G-Cter in ISG15) cross-link involves residue K136.

This sequence belongs to the ubiquitin-conjugating enzyme family. In terms of assembly, interacts with RNF14. ISGylation suppresses ubiquitin E2 enzyme activity. Post-translationally, autoubiquitinated.

It is found in the nucleus. It carries out the reaction S-ubiquitinyl-[E1 ubiquitin-activating enzyme]-L-cysteine + [E2 ubiquitin-conjugating enzyme]-L-cysteine = [E1 ubiquitin-activating enzyme]-L-cysteine + S-ubiquitinyl-[E2 ubiquitin-conjugating enzyme]-L-cysteine.. The enzyme catalyses S-ubiquitinyl-[E1 ubiquitin-activating enzyme]-L-cysteine + [acceptor protein]-L-lysine = [E1 ubiquitin-activating enzyme]-L-cysteine + N(6)-monoubiquitinyl-[acceptor protein]-L-lysine.. It functions in the pathway protein modification; protein ubiquitination. Its function is as follows. Accepts ubiquitin from the E1 complex and catalyzes its covalent attachment to other proteins. Catalyzes the covalent attachment of ISG15 to other proteins. Mediates the selective degradation of short-lived and abnormal proteins. In vitro also catalyzes 'Lys-48'-linked polyubiquitination. The polypeptide is Ubiquitin-conjugating enzyme E2 E1 (Ube2e1) (Mus musculus (Mouse)).